The primary structure comprises 425 residues: Serine--tRNA ligase (425 aa).

233–235 contributes to the L-serine binding site; the sequence is TAE. An ATP-binding site is contributed by 264–266; it reads RRE. E287 contributes to the L-serine binding site. 351–354 contacts ATP; sequence EISS. Residue S385 coordinates L-serine.

It belongs to the class-II aminoacyl-tRNA synthetase family. Type-1 seryl-tRNA synthetase subfamily. In terms of assembly, homodimer. The tRNA molecule binds across the dimer.

Its subcellular location is the cytoplasm. It carries out the reaction tRNA(Ser) + L-serine + ATP = L-seryl-tRNA(Ser) + AMP + diphosphate + H(+). The catalysed reaction is tRNA(Sec) + L-serine + ATP = L-seryl-tRNA(Sec) + AMP + diphosphate + H(+). Its pathway is aminoacyl-tRNA biosynthesis; selenocysteinyl-tRNA(Sec) biosynthesis; L-seryl-tRNA(Sec) from L-serine and tRNA(Sec): step 1/1. In terms of biological role, catalyzes the attachment of serine to tRNA(Ser). Is also able to aminoacylate tRNA(Sec) with serine, to form the misacylated tRNA L-seryl-tRNA(Sec), which will be further converted into selenocysteinyl-tRNA(Sec). This Prochlorococcus marinus (strain AS9601) protein is Serine--tRNA ligase.